The primary structure comprises 1377 residues: Endoribonuclease Dicer homolog 2b (1377 aa).

Residues 1–15 (MGGPLTAAGGRGDGG) show a composition bias toward gly residues. The tract at residues 1–30 (MGGPLTAAGGRGDGGAKAVEPLRPPPPPDP) is disordered. Residues 41-222 (ALERAVRGNT…HNYSKQISEI (182 aa)) form the Helicase ATP-binding domain. Position 54–61 (54–61 (LETGSGKT)) interacts with ATP. The DECH box motif lies at 163 to 166 (DECH). In terms of domain architecture, Helicase C-terminal spans 388–561 (TLLQYRHMQD…DTYYRVESTP (174 aa)). The Dicer dsRNA-binding fold domain occupies 534-626 (SLRLGSISCQ…LPELDVPCDE (93 aa)). The PAZ domain occupies 798 to 913 (RDIDLLQTKD…LPPELCRIIM (116 aa)). 2 consecutive RNase III domains span residues 940-1095 (SVKL…STAG) and 1132-1276 (VRSL…LDSK). Positions 1171, 1262, and 1265 each coordinate Mg(2+). Residues 1302–1367 (DPVKGLQEFC…SKAVLKDLIA (66 aa)) enclose the DRBM domain.

This sequence belongs to the helicase family. Dicer subfamily. In terms of assembly, may interact with ARGONAUTE1 or PINHEAD through their common PAZ domains. Mg(2+) serves as cofactor. Mn(2+) is required as a cofactor.

The protein resides in the nucleus. In terms of biological role, probably involved in the RNA silencing pathway. May cleave double-stranded RNA to produce short 21-24 nucleotides (nt) RNAs which target the selective destruction of complementary RNAs. This is Endoribonuclease Dicer homolog 2b (DCL2B) from Oryza sativa subsp. japonica (Rice).